We begin with the raw amino-acid sequence, 250 residues long: 1-(5-phosphoribosyl)-5-[(5-phosphoribosylamino)methylideneamino] imidazole-4-carboxamide isomerase (250 aa).

The Proton acceptor role is filled by aspartate 12. The Proton donor role is filled by aspartate 133.

This sequence belongs to the HisA/HisF family.

The protein localises to the cytoplasm. The catalysed reaction is 1-(5-phospho-beta-D-ribosyl)-5-[(5-phospho-beta-D-ribosylamino)methylideneamino]imidazole-4-carboxamide = 5-[(5-phospho-1-deoxy-D-ribulos-1-ylimino)methylamino]-1-(5-phospho-beta-D-ribosyl)imidazole-4-carboxamide. Its pathway is amino-acid biosynthesis; L-histidine biosynthesis; L-histidine from 5-phospho-alpha-D-ribose 1-diphosphate: step 4/9. The polypeptide is 1-(5-phosphoribosyl)-5-[(5-phosphoribosylamino)methylideneamino] imidazole-4-carboxamide isomerase (Zymomonas mobilis subsp. mobilis (strain ATCC 31821 / ZM4 / CP4)).